A 286-amino-acid chain; its full sequence is MPELPEVEVVRRGLERWAAHRTVADVEVLHPRAVRRHVAGPDDFAHRLKDHRIGTPSRRGKYLWLPLEDTDQAVLAHLGMSGQLLVQPHETPAEKHLRIRVRFADALGTELRFVDQRTFGGLSLHDTSADGLPDVIAHIARDPLDPLFDDEAFHHALRRKRTTIKRALLDQSLISGVGNIYADEALWRARLHYERPTATLTRPRTTELLGHVRDVMNAALAVGGTSFDSLYVNVNGESGYFDRSLDAYGREGMPCRRCATPMRRRPWMNRSSYFCPKCQRPPRVTP.

The active-site Schiff-base intermediate with DNA is P2. The Proton donor role is filled by E3. The active-site Proton donor; for beta-elimination activity is K61. Residues H96, R117, and K160 each coordinate DNA. An FPG-type zinc finger spans residues 246–280; it reads DAYGREGMPCRRCATPMRRRPWMNRSSYFCPKCQR. The Proton donor; for delta-elimination activity role is filled by R270.

Belongs to the FPG family. In terms of assembly, monomer. It depends on Zn(2+) as a cofactor.

The catalysed reaction is Hydrolysis of DNA containing ring-opened 7-methylguanine residues, releasing 2,6-diamino-4-hydroxy-5-(N-methyl)formamidopyrimidine.. The enzyme catalyses 2'-deoxyribonucleotide-(2'-deoxyribose 5'-phosphate)-2'-deoxyribonucleotide-DNA = a 3'-end 2'-deoxyribonucleotide-(2,3-dehydro-2,3-deoxyribose 5'-phosphate)-DNA + a 5'-end 5'-phospho-2'-deoxyribonucleoside-DNA + H(+). In terms of biological role, involved in base excision repair of DNA damaged by oxidation or by mutagenic agents. Acts as a DNA glycosylase that recognizes and removes damaged bases. Has a preference for oxidized purines, such as 7,8-dihydro-8-oxoguanine (8-oxoG). Has AP (apurinic/apyrimidinic) lyase activity and introduces nicks in the DNA strand. Cleaves the DNA backbone by beta-delta elimination to generate a single-strand break at the site of the removed base with both 3'- and 5'-phosphates. This Streptomyces coelicolor (strain ATCC BAA-471 / A3(2) / M145) protein is Formamidopyrimidine-DNA glycosylase (mutM).